We begin with the raw amino-acid sequence, 459 residues long: UDP-N-acetylmuramoylalanine--D-glutamate ligase (459 aa).

120–126 (GSNGKTT) lines the ATP pocket.

It belongs to the MurCDEF family.

The protein resides in the cytoplasm. It catalyses the reaction UDP-N-acetyl-alpha-D-muramoyl-L-alanine + D-glutamate + ATP = UDP-N-acetyl-alpha-D-muramoyl-L-alanyl-D-glutamate + ADP + phosphate + H(+). It functions in the pathway cell wall biogenesis; peptidoglycan biosynthesis. Functionally, cell wall formation. Catalyzes the addition of glutamate to the nucleotide precursor UDP-N-acetylmuramoyl-L-alanine (UMA). This chain is UDP-N-acetylmuramoylalanine--D-glutamate ligase, found in Lactobacillus acidophilus (strain ATCC 700396 / NCK56 / N2 / NCFM).